The chain runs to 200 residues: NADH-quinone oxidoreductase subunit C (200 aa).

This sequence belongs to the complex I 30 kDa subunit family. NDH-1 is composed of 14 different subunits. Subunits NuoB, C, D, E, F, and G constitute the peripheral sector of the complex.

The protein localises to the cell inner membrane. It catalyses the reaction a quinone + NADH + 5 H(+)(in) = a quinol + NAD(+) + 4 H(+)(out). NDH-1 shuttles electrons from NADH, via FMN and iron-sulfur (Fe-S) centers, to quinones in the respiratory chain. The immediate electron acceptor for the enzyme in this species is believed to be ubiquinone. Couples the redox reaction to proton translocation (for every two electrons transferred, four hydrogen ions are translocated across the cytoplasmic membrane), and thus conserves the redox energy in a proton gradient. The protein is NADH-quinone oxidoreductase subunit C of Rhizobium etli (strain ATCC 51251 / DSM 11541 / JCM 21823 / NBRC 15573 / CFN 42).